A 368-amino-acid chain; its full sequence is Biotin synthase (368 aa).

The region spanning 46-277 (VHGDEVALCG…AAHIFVMGGR (232 aa)) is the Radical SAM core domain. Positions 64, 68, and 71 each coordinate [4Fe-4S] cluster. Residues serine 109, cysteine 142, and cysteine 202 each coordinate [2Fe-2S] cluster. The disordered stretch occupies residues 347–368 (RAAEPGGKRGLPVVGPPRGGCA).

The protein belongs to the radical SAM superfamily. Biotin synthase family. Homodimer. Requires [4Fe-4S] cluster as cofactor. It depends on [2Fe-2S] cluster as a cofactor.

The enzyme catalyses (4R,5S)-dethiobiotin + (sulfur carrier)-SH + 2 reduced [2Fe-2S]-[ferredoxin] + 2 S-adenosyl-L-methionine = (sulfur carrier)-H + biotin + 2 5'-deoxyadenosine + 2 L-methionine + 2 oxidized [2Fe-2S]-[ferredoxin]. The protein operates within cofactor biosynthesis; biotin biosynthesis; biotin from 7,8-diaminononanoate: step 2/2. In terms of biological role, catalyzes the conversion of dethiobiotin (DTB) to biotin by the insertion of a sulfur atom into dethiobiotin via a radical-based mechanism. The chain is Biotin synthase from Anaeromyxobacter sp. (strain Fw109-5).